Consider the following 35-residue polypeptide: Flavodoxin (35 aa).

The Flavodoxin-like domain maps to 4–35; sequence IGLFYGTZTGKTESVAEIIDEFGDEVVTLDID.

Belongs to the flavodoxin family. The cofactor is FMN.

Low-potential electron donor to a number of redox enzymes. This is Flavodoxin from Nostoc sp. (strain MAC).